Here is a 103-residue protein sequence, read N- to C-terminus: Small ribosomal subunit protein uS10 (103 aa).

Belongs to the universal ribosomal protein uS10 family. In terms of assembly, part of the 30S ribosomal subunit.

Involved in the binding of tRNA to the ribosomes. The chain is Small ribosomal subunit protein uS10 from Shewanella pealeana (strain ATCC 700345 / ANG-SQ1).